Here is a 753-residue protein sequence, read N- to C-terminus: 5-methyltetrahydropteroyltriglutamate--homocysteine methyltransferase (753 aa).

Residues 17–20 (RELK) and Lys117 each bind 5-methyltetrahydropteroyltri-L-glutamate. L-homocysteine is bound by residues 431 to 433 (IGS) and Glu484. L-methionine-binding positions include 431–433 (IGS) and Glu484. Residues 515-516 (RC) and Trp561 contribute to the 5-methyltetrahydropteroyltri-L-glutamate site. An L-homocysteine-binding site is contributed by Asp599. Asp599 contributes to the L-methionine binding site. 5-methyltetrahydropteroyltri-L-glutamate is bound at residue Glu605. Zn(2+) is bound by residues His641, Cys643, and Glu665. His694 functions as the Proton donor in the catalytic mechanism. Cys726 contributes to the Zn(2+) binding site.

It belongs to the vitamin-B12 independent methionine synthase family. Zn(2+) serves as cofactor.

The catalysed reaction is 5-methyltetrahydropteroyltri-L-glutamate + L-homocysteine = tetrahydropteroyltri-L-glutamate + L-methionine. It functions in the pathway amino-acid biosynthesis; L-methionine biosynthesis via de novo pathway; L-methionine from L-homocysteine (MetE route): step 1/1. Functionally, catalyzes the transfer of a methyl group from 5-methyltetrahydrofolate to homocysteine resulting in methionine formation. This Shigella flexneri serotype 5b (strain 8401) protein is 5-methyltetrahydropteroyltriglutamate--homocysteine methyltransferase.